Here is a 348-residue protein sequence, read N- to C-terminus: MTDYAAHQQALDRDCLTLSRHVLQQLQSFDAAAQDLSALMNRIALAGKLIARRLSRAGLMEGVLGFTGAVNIQGEDVKKMDVYANEVFIAAFKQSGLVCRLASEEMAQPYYIPENCPIGRYTLLYDPLDGSSNVDINLNVGSIFAIRQQEGTDLDSTAADLLQDGHQQIAAGYILYGPSTMLVYSLGKGTHVFVLDPSLGEFILAIENLQIPASGAIYSVNEGNFWAWEEPIRNYVRHVHRQPGYSARYSGALVADIHRILMEGGVFLYPGTQKNPAGKLRLLYEAAPIAFLVEQAGGKASTGTQPLLDVVPDHLHMRTPLIVGSPENVALVESFIQQTPAQPTVTQV.

Glu-104, Asp-126, Leu-128, and Asp-129 together coordinate Mg(2+). Residues Asp-129–Ser-132, Asn-221, Tyr-249, and Lys-279 each bind substrate. Glu-285 contacts Mg(2+).

This sequence belongs to the FBPase class 1 family. As to quaternary structure, homotetramer. The cofactor is Mg(2+).

It is found in the cytoplasm. The catalysed reaction is beta-D-fructose 1,6-bisphosphate + H2O = beta-D-fructose 6-phosphate + phosphate. It functions in the pathway carbohydrate biosynthesis; Calvin cycle. The polypeptide is Fructose-1,6-bisphosphatase class 1 (Thermosynechococcus vestitus (strain NIES-2133 / IAM M-273 / BP-1)).